The sequence spans 418 residues: Histidine--tRNA ligase (418 aa).

The protein belongs to the class-II aminoacyl-tRNA synthetase family. Homodimer.

The protein resides in the cytoplasm. The catalysed reaction is tRNA(His) + L-histidine + ATP = L-histidyl-tRNA(His) + AMP + diphosphate + H(+). The chain is Histidine--tRNA ligase from Thermosipho africanus (strain TCF52B).